The sequence spans 207 residues: Small heat shock protein hspG7 (207 aa).

The region spanning 30–207 (KTIIDILPPM…YSNTIKININ (178 aa)) is the sHSP domain. Low complexity-rich tracts occupy residues 84–101 (QQQQLVIEKSSTSPSSST) and 122–135 (STTSTTTVSTATTT). Residues 84–149 (QQQQLVIEKS…EDENKTKSSD (66 aa)) are disordered. Residues 136 to 149 (KENKEDENKTKSSD) show a composition bias toward basic and acidic residues.

The protein belongs to the small heat shock protein (HSP20) family.

The polypeptide is Small heat shock protein hspG7 (hspG7) (Dictyostelium discoideum (Social amoeba)).